The following is a 216-amino-acid chain: Regulatory protein RecX (216 aa).

Belongs to the RecX family.

Its subcellular location is the cytoplasm. Functionally, modulates RecA activity. This is Regulatory protein RecX from Clostridium tetani (strain Massachusetts / E88).